A 374-amino-acid chain; its full sequence is Tetraacyldisaccharide 4'-kinase (374 aa).

Residue 59–66 participates in ATP binding; the sequence is TAGGTGKT.

The protein belongs to the LpxK family.

The catalysed reaction is a lipid A disaccharide + ATP = a lipid IVA + ADP + H(+). It functions in the pathway glycolipid biosynthesis; lipid IV(A) biosynthesis; lipid IV(A) from (3R)-3-hydroxytetradecanoyl-[acyl-carrier-protein] and UDP-N-acetyl-alpha-D-glucosamine: step 6/6. In terms of biological role, transfers the gamma-phosphate of ATP to the 4'-position of a tetraacyldisaccharide 1-phosphate intermediate (termed DS-1-P) to form tetraacyldisaccharide 1,4'-bis-phosphate (lipid IVA). The chain is Tetraacyldisaccharide 4'-kinase from Elusimicrobium minutum (strain Pei191).